Here is a 1929-residue protein sequence, read N- to C-terminus: Intraflagellar transport protein 140 (1929 aa).

WD repeat units follow at residues 76 to 116 (QVQV…PSYK) and 119 to 158 (LHQE…YSFE). Positions 774–795 (LSTPDTGSPAVEAEESPQRQTR) are disordered. 3 LRR repeats span residues 957–980 (STSL…TFTK), 1019–1044 (ISLL…SLAE), and 1510–1532 (AQSL…LADI).

Its subcellular location is the cell projection. It is found in the cilium. The protein resides in the flagellum. It localises to the cytoplasm. The protein localises to the cytoskeleton. Its subcellular location is the flagellum axoneme. It is found in the flagellum basal body. Component of the intraflagellar transport complex A (IFT-A) involved in flagellar assembly. The polypeptide is Intraflagellar transport protein 140 (Giardia intestinalis (strain ATCC 50803 / WB clone C6) (Giardia lamblia)).